The following is a 395-amino-acid chain: Elongation factor Tu (395 aa).

Residues 10-204 form the tr-type G domain; sequence KPHVNIGTIG…VVDEYIPTPV (195 aa). The segment at 19–26 is G1; the sequence is GHVDHGKT. 19 to 26 is a binding site for GTP; the sequence is GHVDHGKT. Threonine 26 lines the Mg(2+) pocket. Residues 60-64 are G2; the sequence is GITIN. Residues 81 to 84 form a G3 region; that stretch reads DAPG. Residues 81–85 and 136–139 each bind GTP; these read DAPGH and NKTD. A G4 region spans residues 136 to 139; that stretch reads NKTD. Positions 174-176 are G5; it reads SAL.

This sequence belongs to the TRAFAC class translation factor GTPase superfamily. Classic translation factor GTPase family. EF-Tu/EF-1A subfamily. In terms of assembly, monomer.

The protein resides in the cytoplasm. The enzyme catalyses GTP + H2O = GDP + phosphate + H(+). GTP hydrolase that promotes the GTP-dependent binding of aminoacyl-tRNA to the A-site of ribosomes during protein biosynthesis. The protein is Elongation factor Tu of Lactiplantibacillus plantarum (strain ATCC BAA-793 / NCIMB 8826 / WCFS1) (Lactobacillus plantarum).